Reading from the N-terminus, the 374-residue chain is Chaperone protein DnaJ (374 aa).

Residues 5–70 form the J domain; the sequence is DYYEVLGVSK…QKRAAYDQYG (66 aa). The CR-type zinc-finger motif lies at 132-210; that stretch reads GTTVKIRVPT…CHGHGRVEET (79 aa). Positions 145, 148, 162, 165, 184, 187, 198, and 201 each coordinate Zn(2+). CXXCXGXG motif repeat units lie at residues 145 to 152, 162 to 169, 184 to 191, and 198 to 205; these read CKPCGGSG, CTTCGGHG, CPNCRGQG, and CKECHGHG.

It belongs to the DnaJ family. Homodimer. Zn(2+) is required as a cofactor.

Its subcellular location is the cytoplasm. In terms of biological role, participates actively in the response to hyperosmotic and heat shock by preventing the aggregation of stress-denatured proteins and by disaggregating proteins, also in an autonomous, DnaK-independent fashion. Unfolded proteins bind initially to DnaJ; upon interaction with the DnaJ-bound protein, DnaK hydrolyzes its bound ATP, resulting in the formation of a stable complex. GrpE releases ADP from DnaK; ATP binding to DnaK triggers the release of the substrate protein, thus completing the reaction cycle. Several rounds of ATP-dependent interactions between DnaJ, DnaK and GrpE are required for fully efficient folding. Also involved, together with DnaK and GrpE, in the DNA replication of plasmids through activation of initiation proteins. In Saccharophagus degradans (strain 2-40 / ATCC 43961 / DSM 17024), this protein is Chaperone protein DnaJ.